We begin with the raw amino-acid sequence, 394 residues long: Chorismate synthase (394 aa).

Positions 42 and 48 each coordinate NADP(+). FMN contacts are provided by residues 137-139, 258-259, glycine 302, 317-321, and arginine 343; these read RAS, QA, and KPIAT.

This sequence belongs to the chorismate synthase family. As to quaternary structure, homotetramer. The cofactor is FMNH2.

The catalysed reaction is 5-O-(1-carboxyvinyl)-3-phosphoshikimate = chorismate + phosphate. The protein operates within metabolic intermediate biosynthesis; chorismate biosynthesis; chorismate from D-erythrose 4-phosphate and phosphoenolpyruvate: step 7/7. In terms of biological role, catalyzes the anti-1,4-elimination of the C-3 phosphate and the C-6 proR hydrogen from 5-enolpyruvylshikimate-3-phosphate (EPSP) to yield chorismate, which is the branch point compound that serves as the starting substrate for the three terminal pathways of aromatic amino acid biosynthesis. This reaction introduces a second double bond into the aromatic ring system. This is Chorismate synthase from Streptomyces avermitilis (strain ATCC 31267 / DSM 46492 / JCM 5070 / NBRC 14893 / NCIMB 12804 / NRRL 8165 / MA-4680).